Consider the following 115-residue polypeptide: Nitrogen regulatory protein P-II 2 (115 aa).

Tyr-54 carries the O-UMP-tyrosine modification.

Belongs to the P(II) protein family.

Functionally, could be involved in the regulation of nitrogen fixation. The sequence is that of Nitrogen regulatory protein P-II 2 from Methanothermobacter thermautotrophicus (strain ATCC 29096 / DSM 1053 / JCM 10044 / NBRC 100330 / Delta H) (Methanobacterium thermoautotrophicum).